Reading from the N-terminus, the 233-residue chain is Orotidine 5'-phosphate decarboxylase (233 aa).

Substrate-binding positions include Asp-13, Lys-35, Asp-62–Thr-71, Thr-122, Arg-182, Gln-191, Gly-211, and Arg-212. The active-site Proton donor is the Lys-64.

It belongs to the OMP decarboxylase family. Type 1 subfamily. Homodimer.

It carries out the reaction orotidine 5'-phosphate + H(+) = UMP + CO2. It functions in the pathway pyrimidine metabolism; UMP biosynthesis via de novo pathway; UMP from orotate: step 2/2. In terms of biological role, catalyzes the decarboxylation of orotidine 5'-monophosphate (OMP) to uridine 5'-monophosphate (UMP). In Pseudomonas putida (strain ATCC 700007 / DSM 6899 / JCM 31910 / BCRC 17059 / LMG 24140 / F1), this protein is Orotidine 5'-phosphate decarboxylase.